The following is a 410-amino-acid chain: Sorting nexin-4 (410 aa).

The PX domain occupies 11–135; sequence FIIVSDPQKQ…TFLVSSDWDA (125 aa). A 1,2-diacyl-sn-glycero-3-phospho-(1D-myo-inositol-3-phosphate)-binding residues include arginine 58, serine 60, lysine 84, and arginine 101. A coiled-coil region spans residues 329–368; the sequence is NQEAARREKISKLESKVQALTTEVENAKKVADAFEKEALK.

This sequence belongs to the sorting nexin family.

It localises to the cytoplasm. Its subcellular location is the cytosol. The protein resides in the preautophagosomal structure membrane. The protein localises to the endosome membrane. Sorting nexin, involved in the separation or division of vacuoles throughout the entire life cycle of the cells. Involved in retrieval of late-Golgi SNAREs from post-Golgi endosomes to the trans-Golgi network, for cytoplasm to vacuole transport (Cvt), and autophagy of large cargos including mitophagy, pexophagy and glycophagy. This Eremothecium gossypii (strain ATCC 10895 / CBS 109.51 / FGSC 9923 / NRRL Y-1056) (Yeast) protein is Sorting nexin-4 (SNX4).